Reading from the N-terminus, the 1201-residue chain is ATP-dependent helicase/deoxyribonuclease subunit B (1201 aa).

The protein belongs to the helicase family. AddB/RexB type 2 subfamily. Heterodimer of AddA and RexB. Mg(2+) serves as cofactor.

Functionally, the heterodimer acts as both an ATP-dependent DNA helicase and an ATP-dependent, dual-direction single-stranded exonuclease. Recognizes the chi site generating a DNA molecule suitable for the initiation of homologous recombination. This subunit has 5' -&gt; 3' nuclease activity but not helicase activity. This is ATP-dependent helicase/deoxyribonuclease subunit B from Levilactobacillus brevis (strain ATCC 367 / BCRC 12310 / CIP 105137 / JCM 1170 / LMG 11437 / NCIMB 947 / NCTC 947) (Lactobacillus brevis).